The sequence spans 131 residues: Small ribosomal subunit protein uS8 (131 aa).

The protein belongs to the universal ribosomal protein uS8 family. In terms of assembly, part of the 30S ribosomal subunit. Contacts proteins S5 and S12.

One of the primary rRNA binding proteins, it binds directly to 16S rRNA central domain where it helps coordinate assembly of the platform of the 30S subunit. In Pelodictyon phaeoclathratiforme (strain DSM 5477 / BU-1), this protein is Small ribosomal subunit protein uS8.